The following is a 332-amino-acid chain: Alpha/beta hydrolase domain-containing protein aho-3 (332 aa).

A compositionally biased stretch (low complexity) spans 1–15; the sequence is MSSGAPSGSSMSSTP. A disordered region spans residues 1 to 24; that stretch reads MSSGAPSGSSMSSTPGSPPPRAGG. Active-site charge relay system residues include S191, D256, and H285.

The protein belongs to the AB hydrolase superfamily. ABHD17 family. Palmitoylated on cysteine residues located in a cysteine cluster at the N-terminus which promotes membrane localization and localization to sensory neuron endings. In terms of tissue distribution, expressed in a subset of neurons including AIY, HSN, ADF, AFD, AWC, AWB and NSM, hypodermis, pharyngeal muscle and intestine.

It is found in the cell membrane. The protein localises to the cytoplasmic vesicle membrane. The catalysed reaction is S-hexadecanoyl-L-cysteinyl-[protein] + H2O = L-cysteinyl-[protein] + hexadecanoate + H(+). Its function is as follows. Hydrolyzes fatty acids from S-acylated cysteine residues in proteins. Acts in sensory neurons including AWC to regulate starvation-induced thermotaxis plasticity and salt learning behavior. The polypeptide is Alpha/beta hydrolase domain-containing protein aho-3 (Caenorhabditis elegans).